The sequence spans 103 residues: Acyl carrier protein homolog (103 aa).

The region spanning 3 to 87 (ELTSEIKKEI…ETLEKVVQTT (85 aa)) is the Carrier domain. Ser-45 carries the post-translational modification O-(pantetheine 4'-phosphoryl)serine.

4'-phosphopantetheine is transferred from CoA to a specific serine of the apo-ACP-like protein.

The protein resides in the cytoplasm. Functionally, acyl carrier protein. The chain is Acyl carrier protein homolog from Clostridium acetobutylicum (strain ATCC 824 / DSM 792 / JCM 1419 / IAM 19013 / LMG 5710 / NBRC 13948 / NRRL B-527 / VKM B-1787 / 2291 / W).